A 241-amino-acid chain; its full sequence is Geranylgeranylglyceryl phosphate synthase (241 aa).

Mg(2+)-binding residues include D19 and S46. Residues 167–173, 198–199, and 220–221 contribute to the sn-glycerol 1-phosphate site; these read YLEAGSG, GG, and GT.

It belongs to the GGGP/HepGP synthase family. Group II subfamily. It depends on Mg(2+) as a cofactor.

The protein resides in the cytoplasm. The enzyme catalyses sn-glycerol 1-phosphate + (2E,6E,10E)-geranylgeranyl diphosphate = sn-3-O-(geranylgeranyl)glycerol 1-phosphate + diphosphate. Its pathway is membrane lipid metabolism; glycerophospholipid metabolism. In terms of biological role, prenyltransferase that catalyzes the transfer of the geranylgeranyl moiety of geranylgeranyl diphosphate (GGPP) to the C3 hydroxyl of sn-glycerol-1-phosphate (G1P). This reaction is the first ether-bond-formation step in the biosynthesis of archaeal membrane lipids. The polypeptide is Geranylgeranylglyceryl phosphate synthase (Pyrobaculum calidifontis (strain DSM 21063 / JCM 11548 / VA1)).